The primary structure comprises 155 residues: Small ribosomal subunit protein uS7c (155 aa).

It belongs to the universal ribosomal protein uS7 family. Part of the 30S ribosomal subunit.

The protein localises to the plastid. It is found in the chloroplast. Functionally, one of the primary rRNA binding proteins, it binds directly to 16S rRNA where it nucleates assembly of the head domain of the 30S subunit. The protein is Small ribosomal subunit protein uS7c (rps7) of Gunnera chilensis (Chilean rhubarb).